We begin with the raw amino-acid sequence, 577 residues long: 2-succinyl-5-enolpyruvyl-6-hydroxy-3-cyclohexene-1-carboxylate synthase (577 aa).

The protein belongs to the TPP enzyme family. MenD subfamily. In terms of assembly, homodimer. The cofactor is Mg(2+). It depends on Mn(2+) as a cofactor. Requires thiamine diphosphate as cofactor.

The catalysed reaction is isochorismate + 2-oxoglutarate + H(+) = 5-enolpyruvoyl-6-hydroxy-2-succinyl-cyclohex-3-ene-1-carboxylate + CO2. It functions in the pathway quinol/quinone metabolism; 1,4-dihydroxy-2-naphthoate biosynthesis; 1,4-dihydroxy-2-naphthoate from chorismate: step 2/7. It participates in quinol/quinone metabolism; menaquinone biosynthesis. In terms of biological role, catalyzes the thiamine diphosphate-dependent decarboxylation of 2-oxoglutarate and the subsequent addition of the resulting succinic semialdehyde-thiamine pyrophosphate anion to isochorismate to yield 2-succinyl-5-enolpyruvyl-6-hydroxy-3-cyclohexene-1-carboxylate (SEPHCHC). The sequence is that of 2-succinyl-5-enolpyruvyl-6-hydroxy-3-cyclohexene-1-carboxylate synthase from Porphyromonas gingivalis (strain ATCC BAA-308 / W83).